Reading from the N-terminus, the 132-residue chain is Large ribosomal subunit protein uL14 (132 aa).

Belongs to the universal ribosomal protein uL14 family. Part of the 50S ribosomal subunit. Forms a cluster with proteins L3 and L24e, part of which may contact the 16S rRNA in 2 intersubunit bridges.

In terms of biological role, binds to 23S rRNA. Forms part of two intersubunit bridges in the 70S ribosome. The polypeptide is Large ribosomal subunit protein uL14 (Methanosarcina mazei (strain ATCC BAA-159 / DSM 3647 / Goe1 / Go1 / JCM 11833 / OCM 88) (Methanosarcina frisia)).